Reading from the N-terminus, the 131-residue chain is MTTKRKPYVRGMQPNWWTKLGFYRFYITREGTCLPQLWFSLVVLFGVFALKNGPESWAGFVGFLSNPILMLINIVTLIATVFHTATWFKLAPKAVNIVVKDEKLPQEPIVRGLWGLTIVVTVVILAVALIV.

3 helical membrane passes run 30–50 (EGTCLPQLWFSLVVLFGVFAL), 58–78 (AGFVGFLSNPILMLINIVTLI), and 109–129 (IVRGLWGLTIVVTVVILAVAL).

This sequence belongs to the FrdC family. In terms of assembly, part of an enzyme complex containing four subunits: a flavoprotein (FrdA), an iron-sulfur protein (FrdB), and two hydrophobic anchor proteins (FrdC and FrdD).

It is found in the cell inner membrane. In terms of biological role, two distinct, membrane-bound, FAD-containing enzymes are responsible for the catalysis of fumarate and succinate interconversion; fumarate reductase is used in anaerobic growth, and succinate dehydrogenase is used in aerobic growth. Anchors the catalytic components of the fumarate reductase complex to the cell inner membrane, binds quinones. This is Fumarate reductase subunit C from Proteus vulgaris.